Consider the following 349-residue polypeptide: D-alanine--D-alanine ligase (349 aa).

Residues 133-335 (QVLESATTIP…YSVLIEELVS (203 aa)) enclose the ATP-grasp domain. 163-218 (EEKLIYPVFVKPANMGSSVGISKAENRTDLKQAIALALKYDSRVLIEQGVDAREIE) is a binding site for ATP. Residues aspartate 289, glutamate 302, and asparagine 304 each coordinate Mg(2+).

This sequence belongs to the D-alanine--D-alanine ligase family. Mg(2+) serves as cofactor. It depends on Mn(2+) as a cofactor.

The protein resides in the cytoplasm. It carries out the reaction 2 D-alanine + ATP = D-alanyl-D-alanine + ADP + phosphate + H(+). It participates in cell wall biogenesis; peptidoglycan biosynthesis. In terms of biological role, cell wall formation. This is D-alanine--D-alanine ligase from Streptococcus mutans serotype c (strain ATCC 700610 / UA159).